The primary structure comprises 310 residues: Aspartate carbamoyltransferase catalytic subunit (310 aa).

Carbamoyl phosphate contacts are provided by Arg-55 and Thr-56. Lys-85 contributes to the L-aspartate binding site. Residues Arg-106, His-135, and Gln-138 each coordinate carbamoyl phosphate. 2 residues coordinate L-aspartate: Arg-168 and Arg-230. The carbamoyl phosphate site is built by Leu-268 and Pro-269.

This sequence belongs to the aspartate/ornithine carbamoyltransferase superfamily. ATCase family. As to quaternary structure, heterododecamer (2C3:3R2) of six catalytic PyrB chains organized as two trimers (C3), and six regulatory PyrI chains organized as three dimers (R2).

It carries out the reaction carbamoyl phosphate + L-aspartate = N-carbamoyl-L-aspartate + phosphate + H(+). The protein operates within pyrimidine metabolism; UMP biosynthesis via de novo pathway; (S)-dihydroorotate from bicarbonate: step 2/3. In terms of biological role, catalyzes the condensation of carbamoyl phosphate and aspartate to form carbamoyl aspartate and inorganic phosphate, the committed step in the de novo pyrimidine nucleotide biosynthesis pathway. The chain is Aspartate carbamoyltransferase catalytic subunit from Buchnera aphidicola subsp. Acyrthosiphon pisum (strain 5A).